Reading from the N-terminus, the 183-residue chain is Translocon-associated protein subunit beta (183 aa).

The signal sequence occupies residues 1–17 (MRLLAVVVLALLAVSQA). The Lumenal segment spans residues 18 to 146 (EEGARLLASK…REFDRRFSPH (129 aa)). Asn-88 carries an N-linked (GlcNAc...) (high mannose) asparagine glycan. The N-linked (GlcNAc...) asparagine glycan is linked to Asn-104. A helical transmembrane segment spans residues 147–167 (FLDWAAFGVMTLPSIGIPLLL). Topologically, residues 168 to 183 (WYSSKRKYDTPKPKKN) are cytoplasmic.

The protein belongs to the TRAP-beta family. As to quaternary structure, heterotetramer of TRAP-alpha, TRAP-beta, TRAP-delta and TRAP-gamma. Interacts with STING1.

Its subcellular location is the endoplasmic reticulum membrane. Its function is as follows. TRAP proteins are part of a complex whose function is to bind calcium to the ER membrane and thereby regulate the retention of ER resident proteins. This chain is Translocon-associated protein subunit beta (Ssr2), found in Mus musculus (Mouse).